The primary structure comprises 360 residues: Amine dehydrogenase (360 aa).

Belongs to the amine dehydrogenase family. As to quaternary structure, homodimer.

The enzyme catalyses a secondary alkyl amine + NAD(+) + H2O = a ketone + NH4(+) + NADH + H(+). The catalysed reaction is a secondary alkyl amine + NADP(+) + H2O = a ketone + NH4(+) + NADPH + H(+). It catalyses the reaction serinol + NAD(+) + H2O = dihydroxyacetone + NH4(+) + NADH + H(+). It carries out the reaction serinol + NADP(+) + H2O = dihydroxyacetone + NH4(+) + NADPH + H(+). The enzyme catalyses 2-aminopropan-1-ol + NAD(+) + H2O = hydroxyacetone + NH4(+) + NADH + H(+). The catalysed reaction is (R)-1-phenylethylamine + NAD(+) + H2O = acetophenone + NH4(+) + NADH + H(+). It catalyses the reaction (S)-1-phenylethylamine + NAD(+) + H2O = acetophenone + NH4(+) + NADH + H(+). It carries out the reaction (2S)-2-aminobutan-1-ol + NAD(+) + H2O = 1-hydroxy-2-butanone + NH4(+) + NADH + H(+). The enzyme catalyses (2S)-2-amino-3-methylbutan-1-ol + NAD(+) + H2O = 1-hydroxy-3-methylbutan-2-one + NH4(+) + NADH + H(+). The catalysed reaction is 2-aminopentan-1-ol + NAD(+) + H2O = 1-hydroxypentan-2-one + NH4(+) + NADH + H(+). It catalyses the reaction (S)-leucinol + NAD(+) + H2O = 1-hydroxy-4-methylpentan-2-one + NH4(+) + NADH + H(+). It carries out the reaction (S)-isoleucinol + NAD(+) + H2O = (3S)-1-hydroxy-3-methylpentan-2-one + NH4(+) + NADH + H(+). The enzyme catalyses (S)-methioninol + NAD(+) + H2O = 1-hydroxy-4-(methythio)butan-2-one + NH4(+) + NADH + H(+). The catalysed reaction is 2-aminocyclohexanol + NAD(+) + H2O = 2-hydroxycyclohexan-1-one + NH4(+) + NADH + H(+). It catalyses the reaction L-alanine + NAD(+) + H2O = pyruvate + NH4(+) + NADH + H(+). It carries out the reaction D-alanine + NAD(+) + H2O = pyruvate + NH4(+) + NADH + H(+). The enzyme catalyses L-aspartate + NAD(+) + H2O = oxaloacetate + NH4(+) + NADH + H(+). The catalysed reaction is D-aspartate + NAD(+) + H2O = oxaloacetate + NH4(+) + NADH + H(+). It catalyses the reaction L-glutamate + NAD(+) + H2O = 2-oxoglutarate + NH4(+) + NADH + H(+). It carries out the reaction D-glutamate + NAD(+) + H2O = 2-oxoglutarate + NH4(+) + NADH + H(+). The enzyme catalyses L-serine + NAD(+) + H2O = 3-hydroxypyruvate + NH4(+) + NADH + H(+). The catalysed reaction is D-serine + NAD(+) + H2O = 3-hydroxypyruvate + NH4(+) + NADH + H(+). It catalyses the reaction methylamine + NAD(+) + H2O = formaldehyde + NH4(+) + NADH + H(+). It carries out the reaction ethylamine + NAD(+) + H2O = acetaldehyde + NH4(+) + NADH + H(+). The enzyme catalyses propylamine + NAD(+) + H2O = propanal + NH4(+) + NADH + H(+). The catalysed reaction is butylamine + NAD(+) + H2O = butanal + NH4(+) + NADH + H(+). It catalyses the reaction hexylamine + NAD(+) + H2O = hexanal + NH4(+) + NADH + H(+). It carries out the reaction octylamine + NAD(+) + H2O = octanal + NH4(+) + NADH + H(+). The enzyme catalyses (R)-sec-butylamine + NAD(+) + H2O = butan-2-one + NH4(+) + NADH + H(+). The catalysed reaction is (S)-sec-butylamine + NAD(+) + H2O = butan-2-one + NH4(+) + NADH + H(+). It catalyses the reaction 2-aminopentane + NAD(+) + H2O = pentan-2-one + NH4(+) + NADH + H(+). It carries out the reaction 3-aminopentane + NAD(+) + H2O = pentan-3-one + NH4(+) + NADH + H(+). The enzyme catalyses (2R)-heptan-2-amine + NAD(+) + H2O = heptan-2-one + NH4(+) + NADH + H(+). The catalysed reaction is (2S)-heptan-2-amine + NAD(+) + H2O = heptan-2-one + NH4(+) + NADH + H(+). It catalyses the reaction benzylamine + NAD(+) + H2O = benzaldehyde + NH4(+) + NADH + H(+). It carries out the reaction 3-aminobutan-2-ol + NAD(+) + H2O = acetoin + NH4(+) + NADH + H(+). The enzyme catalyses 3-aminobutan-1-ol + NAD(+) + H2O = 4-hydroxybutan-2-one + NH4(+) + NADH + H(+). The catalysed reaction is 5-hydroxypentan-2-amine + NAD(+) + H2O = 5-hydroxypentan-2-one + NH4(+) + NADH + H(+). It catalyses the reaction 4-hydroxyhexan-3-amine + NAD(+) + H2O = 4-hydroxyhexan-3-one + NH4(+) + NADH + H(+). It carries out the reaction 5-hydroxyoctan-4-amine + NAD(+) + H2O = 5-hydroxyoctan-4-one + NH4(+) + NADH + H(+). The enzyme catalyses 2-hydroxy-1-phenylethan-1-amine + NAD(+) + H2O = 2-hydroxyacetophenone + NH4(+) + NADH + H(+). The catalysed reaction is hexan-2-amine + NAD(+) + H2O = hexan-2-one + NH4(+) + NADH + H(+). It catalyses the reaction 4-phenylbutan-2-amine + NAD(+) + H2O = 4-phenylbutan-2-one + NH4(+) + NADH + H(+). Its function is as follows. Catalyzes the reversible oxidative deaminations of a broad range of amines, amino alcohols and amino acids. Catalyzes the reversible dehydrogenation of serinol in the presence of NAD(+) to give dihydroxyacetone, ammonium ion and NADH, while NADP(+) shows a slight activity. Is also able to produce 2-amino-1-propanol and aspartate by the reductive amination of the corresponding keto alcohol (hydroxyacetone) and keto acid (oxaloacetate) in the presence of ammonium ions and NADH, and that of acetophenone from phenylethylamine by the oxidative deamination in the presence of NAD(+). In Streptomyces virginiae (Streptomyces cinnamonensis), this protein is Amine dehydrogenase.